Consider the following 421-residue polypeptide: Serine hydroxymethyltransferase (421 aa).

(6S)-5,6,7,8-tetrahydrofolate contacts are provided by residues Leu-121 and 125–127 (GHL). Position 229 is an N6-(pyridoxal phosphate)lysine (Lys-229).

This sequence belongs to the SHMT family. Homodimer. It depends on pyridoxal 5'-phosphate as a cofactor.

The protein resides in the cytoplasm. It catalyses the reaction (6R)-5,10-methylene-5,6,7,8-tetrahydrofolate + glycine + H2O = (6S)-5,6,7,8-tetrahydrofolate + L-serine. The protein operates within one-carbon metabolism; tetrahydrofolate interconversion. It participates in amino-acid biosynthesis; glycine biosynthesis; glycine from L-serine: step 1/1. Catalyzes the reversible interconversion of serine and glycine with tetrahydrofolate (THF) serving as the one-carbon carrier. This reaction serves as the major source of one-carbon groups required for the biosynthesis of purines, thymidylate, methionine, and other important biomolecules. Also exhibits THF-independent aldolase activity toward beta-hydroxyamino acids, producing glycine and aldehydes, via a retro-aldol mechanism. This Haemophilus influenzae (strain 86-028NP) protein is Serine hydroxymethyltransferase.